The following is a 323-amino-acid chain: Beta-ketoacyl-[acyl-carrier-protein] synthase III (323 aa).

Active-site residues include cysteine 113 and histidine 250. The interval 251–255 is ACP-binding; that stretch reads QANKR. The active site involves asparagine 280.

This sequence belongs to the thiolase-like superfamily. FabH family. Homodimer.

Its subcellular location is the cytoplasm. The enzyme catalyses malonyl-[ACP] + acetyl-CoA + H(+) = 3-oxobutanoyl-[ACP] + CO2 + CoA. It participates in lipid metabolism; fatty acid biosynthesis. Catalyzes the condensation reaction of fatty acid synthesis by the addition to an acyl acceptor of two carbons from malonyl-ACP. Catalyzes the first condensation reaction which initiates fatty acid synthesis and may therefore play a role in governing the total rate of fatty acid production. Possesses both acetoacetyl-ACP synthase and acetyl transacylase activities. Its substrate specificity determines the biosynthesis of branched-chain and/or straight-chain of fatty acids. The sequence is that of Beta-ketoacyl-[acyl-carrier-protein] synthase III from Chelativorans sp. (strain BNC1).